A 265-amino-acid chain; its full sequence is MAGHTTADYISHHLTFLTTGQGFWNVHLDTLFFSLVSGVLFLFFFYRTASKATSGVPGKFQCLVEMLVEWVDGVVKDNIHGSDVRHQIGSLALTIFCWVFVMNAIDLIPVDFPPQFAELLGIHYLRAVPTADISATLGMSVCVFALIIFYTIKSKGLGGFVKEYTLHPFNHWAFIPVNFLLEAVTLLAKPISLAFRLFGNMYAGELIFVLIAVMYMADNIIPQVLGIPLHLIWAIFHILVITLQAFIFMMLTVVYLSIAYNKSDH.

Helical transmembrane passes span 26–46 (VHLD…FFFY), 88–108 (IGSL…IDLI), 132–152 (DISA…FYTI), 168–188 (PFNH…TLLA), 195–217 (FRLF…MYMA), and 231–251 (LIWA…FMML).

This sequence belongs to the ATPase A chain family. As to quaternary structure, F-type ATPases have 2 components, CF(1) - the catalytic core - and CF(0) - the membrane proton channel. CF(1) has five subunits: alpha(3), beta(3), gamma(1), delta(1), epsilon(1). CF(0) has three main subunits: a(1), b(2) and c(9-12). The alpha and beta chains form an alternating ring which encloses part of the gamma chain. CF(1) is attached to CF(0) by a central stalk formed by the gamma and epsilon chains, while a peripheral stalk is formed by the delta and b chains.

The protein localises to the cell inner membrane. Its function is as follows. Key component of the proton channel; it plays a direct role in the translocation of protons across the membrane. This Histophilus somni (strain 129Pt) (Haemophilus somnus) protein is ATP synthase subunit a.